A 91-amino-acid polypeptide reads, in one-letter code: Probable Fe(2+)-trafficking protein (91 aa).

Belongs to the Fe(2+)-trafficking protein family.

In terms of biological role, could be a mediator in iron transactions between iron acquisition and iron-requiring processes, such as synthesis and/or repair of Fe-S clusters in biosynthetic enzymes. The chain is Probable Fe(2+)-trafficking protein from Tolumonas auensis (strain DSM 9187 / NBRC 110442 / TA 4).